Consider the following 150-residue polypeptide: Large ribosomal subunit protein bL9 (150 aa).

This sequence belongs to the bacterial ribosomal protein bL9 family.

In terms of biological role, binds to the 23S rRNA. This Vibrio atlanticus (strain LGP32) (Vibrio splendidus (strain Mel32)) protein is Large ribosomal subunit protein bL9.